The sequence spans 500 residues: Probable malate:quinone oxidoreductase (500 aa).

The protein belongs to the MQO family. It depends on FAD as a cofactor.

It carries out the reaction (S)-malate + a quinone = a quinol + oxaloacetate. Its pathway is carbohydrate metabolism; tricarboxylic acid cycle; oxaloacetate from (S)-malate (quinone route): step 1/1. This Halalkalibacterium halodurans (strain ATCC BAA-125 / DSM 18197 / FERM 7344 / JCM 9153 / C-125) (Bacillus halodurans) protein is Probable malate:quinone oxidoreductase.